The chain runs to 184 residues: ATP synthase subunit delta (184 aa).

This sequence belongs to the ATPase delta chain family. F-type ATPases have 2 components, F(1) - the catalytic core - and F(0) - the membrane proton channel. F(1) has five subunits: alpha(3), beta(3), gamma(1), delta(1), epsilon(1). F(0) has three main subunits: a(1), b(2) and c(10-14). The alpha and beta chains form an alternating ring which encloses part of the gamma chain. F(1) is attached to F(0) by a central stalk formed by the gamma and epsilon chains, while a peripheral stalk is formed by the delta and b chains.

Its subcellular location is the cell inner membrane. Its function is as follows. F(1)F(0) ATP synthase produces ATP from ADP in the presence of a proton or sodium gradient. F-type ATPases consist of two structural domains, F(1) containing the extramembraneous catalytic core and F(0) containing the membrane proton channel, linked together by a central stalk and a peripheral stalk. During catalysis, ATP synthesis in the catalytic domain of F(1) is coupled via a rotary mechanism of the central stalk subunits to proton translocation. In terms of biological role, this protein is part of the stalk that links CF(0) to CF(1). It either transmits conformational changes from CF(0) to CF(1) or is implicated in proton conduction. The protein is ATP synthase subunit delta of Caulobacter vibrioides (strain NA1000 / CB15N) (Caulobacter crescentus).